Reading from the N-terminus, the 111-residue chain is uncharacterized protein (111 aa).

Residues 3–29 (RKITSYKTSLQGLREENEDVELMNLNL) are a coiled coil. The PPM-type phosphatase domain maps to 6–111 (TSYKTSLQGL…TWWMYCSSYY (106 aa)).

This is an uncharacterized protein from Acanthamoeba polyphaga mimivirus (APMV).